A 199-amino-acid chain; its full sequence is Recombination protein RecR (199 aa).

The segment at 57-72 (CSICGNITEDDPCVIC) adopts a C4-type zinc-finger fold. Residues 80–176 (STVLVVEEAK…KVTRLAHGLS (97 aa)) form the Toprim domain.

This sequence belongs to the RecR family.

Its function is as follows. May play a role in DNA repair. It seems to be involved in an RecBC-independent recombinational process of DNA repair. It may act with RecF and RecO. The sequence is that of Recombination protein RecR from Lactiplantibacillus plantarum (strain ATCC BAA-793 / NCIMB 8826 / WCFS1) (Lactobacillus plantarum).